The following is a 159-amino-acid chain: 6,7-dimethyl-8-ribityllumazine synthase (159 aa).

5-amino-6-(D-ribitylamino)uracil contacts are provided by residues Phe-22, Ala-57–Glu-59, and Ala-81–Ile-83. Gly-86–Thr-87 provides a ligand contact to (2S)-2-hydroxy-3-oxobutyl phosphate. The active-site Proton donor is the His-89. Residue Phe-114 participates in 5-amino-6-(D-ribitylamino)uracil binding. Arg-128 lines the (2S)-2-hydroxy-3-oxobutyl phosphate pocket.

Belongs to the DMRL synthase family. Forms an icosahedral capsid composed of 60 subunits, arranged as a dodecamer of pentamers.

The catalysed reaction is (2S)-2-hydroxy-3-oxobutyl phosphate + 5-amino-6-(D-ribitylamino)uracil = 6,7-dimethyl-8-(1-D-ribityl)lumazine + phosphate + 2 H2O + H(+). Its pathway is cofactor biosynthesis; riboflavin biosynthesis; riboflavin from 2-hydroxy-3-oxobutyl phosphate and 5-amino-6-(D-ribitylamino)uracil: step 1/2. Its function is as follows. Catalyzes the formation of 6,7-dimethyl-8-ribityllumazine by condensation of 5-amino-6-(D-ribitylamino)uracil with 3,4-dihydroxy-2-butanone 4-phosphate. This is the penultimate step in the biosynthesis of riboflavin. The sequence is that of 6,7-dimethyl-8-ribityllumazine synthase from Shewanella denitrificans (strain OS217 / ATCC BAA-1090 / DSM 15013).